The following is a 517-amino-acid chain: Phosphatase and actin regulator 3 (517 aa).

The disordered stretch occupies residues 1–24; sequence MDQTPPARSEPLVSGIRTPPVRRN. Thr29 bears the Phosphothreonine mark. Disordered regions lie at residues 41–247 and 260–320; these read KKKN…RPLP and ATKH…SEEN. The stretch at 52–77 is one RPEL 1 repeat; the sequence is SALEKKMAGRQGREELIKQGLLEMME. Basic and acidic residues predominate over residues 54 to 68; that stretch reads LEKKMAGRQGREELI. Polar residues-rich tracts occupy residues 92 to 129 and 157 to 172; these read QPAQSEPSAGEQETLTSEGVQPGSPSASGTDQASQDEL and LPTTDEPSQEALSGSL. Residues 187–198 show a composition bias toward pro residues; sequence PSPPLLPTPPPK. Phosphoserine is present on Ser188. Thr194 bears the Phosphothreonine mark. Positions 260-300 are enriched in basic and acidic residues; it reads ATKHRQDSFQGRECRGSPKKRMDVRLSRTSSMERGKERDEA. 3 RPEL repeats span residues 359 to 384, 397 to 422, and 435 to 460; these read ELLAVKLRNRPSKQELEDRNIFPRRT, MKLSKRLSQRPAVEELERRNILKQRN, and QRLTRKLNQRPTVDELRDRKILIRFS. A coiled-coil region spans residues 408-444; sequence AVEELERRNILKQRNDQTEQEERREIKQRLTRKLNQR.

The protein belongs to the phosphatase and actin regulator family. As to quaternary structure, binds actin and PPP1CA; thus inhibiting the protein phosphatase 1 (PP1) activity. Diffusely expressed throughout the brain cortex, with highest levels in the cortex and the hippocampus and lower levels in the striatum and thalamus.

The protein localises to the nucleus matrix. This Rattus norvegicus (Rat) protein is Phosphatase and actin regulator 3 (Phactr3).